Reading from the N-terminus, the 807-residue chain is MTDHFDTLIRWQECHDEQQNALLTRPAISASVEISRTVEQILHAVKEYGDHTLREFSRRFDKTVIENIRISPEEIAAAENSLNNDIKQAMQQAMNNIRVFHEAQKPIKIEVETQPGVYCQQVTRPIDSVGLYIPGGSAPLLSTVLMLGTPAQIAGCHKVVLCSPPPIANEILYAATLCGITEIFQIGGAQAIAAMAFGTESVPKVDKIFGPGNAYVTEAKRQVSQRVDGATIDMPAGPSELLIIADAGANPVFVAADLLSQAEHGPDSQVILVTPDEALAKKVITEIEKQLTRLPRNQIAAKALAHSRIIVTTSLQQCVEISNRYGPEHLIIQTRQPEQLVEKITSAGSVFLGDWSPESAGDYASGTNHVLPTYGYTSTYSSLGLADFLKRMTIQQLTPQGLLNLSQTIETLAQAEQLTAHKNALTLRVAALNIAGQGVNMNNIFDANLLARENIRKLTPYMSARRLGGKGDVWLNANEYPLAPDFQCTEQTLNRYPDCQPASVIRRYAAYAGLQPEQVLACRGADESIELLIRVFCEPGQDVVLFCPPTYGMYSVSAETFGVEQKKITALENWQLDIEAIENNLDRVKLIYICSPNNPTGNAINPDSLRKILELTANRAIVTIDEAYIEFCPENSIASWLKNYPNLVILRTLSKAFALAGLRCGFTLASVDIITLLLKVIAPYPLSTPVADIAAQALTAENIAIMQKRVVEIRENRNDLQQALNKLAIVEKVFPSETNYILVKFYDAETVFKTLWHQGIILRDQRKQPGLEGCLRITIGSRKECERVVEAISALSTVNEQPKEIAN.

Residues 1–440 (MTDHFDTLIR…ALNIAGQGVN (440 aa)) are histidinol dehydrogenase. The Zn(2+) site is built by Gln-261 and His-264. Active-site residues include Glu-328 and His-329. Positions 362 and 421 each coordinate Zn(2+). A histidinol-phosphate aminotransferase region spans residues 441-807 (MNNIFDANLL…VNEQPKEIAN (367 aa)). An N6-(pyridoxal phosphate)lysine modification is found at Lys-655.

The protein in the N-terminal section; belongs to the histidinol dehydrogenase family. It in the C-terminal section; belongs to the class-II pyridoxal-phosphate-dependent aminotransferase family. Histidinol-phosphate aminotransferase subfamily. In terms of assembly, homodimer. Zn(2+) serves as cofactor. Pyridoxal 5'-phosphate is required as a cofactor.

The enzyme catalyses L-histidinol phosphate + 2-oxoglutarate = 3-(imidazol-4-yl)-2-oxopropyl phosphate + L-glutamate. The catalysed reaction is L-histidinol + 2 NAD(+) + H2O = L-histidine + 2 NADH + 3 H(+). The protein operates within amino-acid biosynthesis; L-histidine biosynthesis; L-histidine from 5-phospho-alpha-D-ribose 1-diphosphate: step 7/9. It participates in amino-acid biosynthesis; L-histidine biosynthesis; L-histidine from 5-phospho-alpha-D-ribose 1-diphosphate: step 9/9. Catalyzes the sequential NAD-dependent oxidations of L-histidinol to L-histidinaldehyde and then to L-histidine. The sequence is that of Putative histidine biosynthesis bifunctional protein HisCD (hisCD) from Photorhabdus laumondii subsp. laumondii (strain DSM 15139 / CIP 105565 / TT01) (Photorhabdus luminescens subsp. laumondii).